We begin with the raw amino-acid sequence, 334 residues long: N-acetyl-gamma-glutamyl-phosphate reductase (334 aa).

Residue Cys154 is part of the active site.

It belongs to the NAGSA dehydrogenase family. Type 1 subfamily.

It localises to the cytoplasm. It carries out the reaction N-acetyl-L-glutamate 5-semialdehyde + phosphate + NADP(+) = N-acetyl-L-glutamyl 5-phosphate + NADPH + H(+). The protein operates within amino-acid biosynthesis; L-arginine biosynthesis; N(2)-acetyl-L-ornithine from L-glutamate: step 3/4. Its function is as follows. Catalyzes the NADPH-dependent reduction of N-acetyl-5-glutamyl phosphate to yield N-acetyl-L-glutamate 5-semialdehyde. In Buchnera aphidicola subsp. Acyrthosiphon pisum (strain 5A), this protein is N-acetyl-gamma-glutamyl-phosphate reductase.